The chain runs to 194 residues: Putative manganese efflux pump MntP (194 aa).

6 helical membrane-spanning segments follow: residues 3–23 (PITILLIGIAMSTDAFAAAIG), 37–57 (LYVAVIFGVIETATPIAGWLL), 65–85 (IAAFDHWIAFGLLSGLGIHMI), 112–132 (LAATALATSIDAAAIGISLAF), 137–157 (IGIVAAVIGLCTFTMVIFGVM), and 170–190 (AEIVGGIILIIVGSTILYEHL).

This sequence belongs to the MntP (TC 9.B.29) family.

It localises to the cell inner membrane. Probably functions as a manganese efflux pump. This Xylella fastidiosa (strain M12) protein is Putative manganese efflux pump MntP.